The following is a 156-amino-acid chain: Deoxyuridine 5'-triphosphate nucleotidohydrolase (156 aa).

Residues 76-78 (RSG), asparagine 89, 93-95 (TVD), and lysine 103 contribute to the substrate site.

This sequence belongs to the dUTPase family. Mg(2+) serves as cofactor.

It catalyses the reaction dUTP + H2O = dUMP + diphosphate + H(+). It participates in pyrimidine metabolism; dUMP biosynthesis; dUMP from dCTP (dUTP route): step 2/2. Its function is as follows. This enzyme is involved in nucleotide metabolism: it produces dUMP, the immediate precursor of thymidine nucleotides and it decreases the intracellular concentration of dUTP so that uracil cannot be incorporated into DNA. The chain is Deoxyuridine 5'-triphosphate nucleotidohydrolase from Rhizobium etli (strain ATCC 51251 / DSM 11541 / JCM 21823 / NBRC 15573 / CFN 42).